Here is a 276-residue protein sequence, read N- to C-terminus: NAD-capped RNA hydrolase NudC (276 aa).

Arg82 contacts substrate. Positions 112 and 115 each coordinate Zn(2+). Glu125 contacts substrate. Zn(2+) is bound by residues Cys130 and Cys133. Tyr138 lines the substrate pocket. Residues 139–262 form the Nudix hydrolase domain; sequence PRISPSMIVL…SIARYLIDLY (124 aa). Residues Ala172, Glu188, and Glu192 each contribute to the a divalent metal cation site. The Nudix box motif lies at 173 to 194; that stretch reads GFAEPGESAEDCLVREVREEVA. 206 to 213 is a substrate binding site; the sequence is QCWPFPHS. Glu233 serves as a coordination point for a divalent metal cation. Ala255 contacts substrate.

Belongs to the Nudix hydrolase family. NudC subfamily. As to quaternary structure, homodimer. The cofactor is Mg(2+). It depends on Mn(2+) as a cofactor. Zn(2+) is required as a cofactor.

The enzyme catalyses a 5'-end NAD(+)-phospho-ribonucleoside in mRNA + H2O = a 5'-end phospho-adenosine-phospho-ribonucleoside in mRNA + beta-nicotinamide D-ribonucleotide + 2 H(+). It catalyses the reaction NAD(+) + H2O = beta-nicotinamide D-ribonucleotide + AMP + 2 H(+). It carries out the reaction NADH + H2O = reduced beta-nicotinamide D-ribonucleotide + AMP + 2 H(+). MRNA decapping enzyme that specifically removes the nicotinamide adenine dinucleotide (NAD) cap from a subset of mRNAs by hydrolyzing the diphosphate linkage to produce nicotinamide mononucleotide (NMN) and 5' monophosphate mRNA. The NAD-cap is present at the 5'-end of some mRNAs and stabilizes RNA against 5'-processing. Has preference for mRNAs with a 5'-end purine. Catalyzes the hydrolysis of a broad range of dinucleotide pyrophosphates. This is NAD-capped RNA hydrolase NudC from Pseudomonas putida (strain W619).